The chain runs to 249 residues: 2,3-bisphosphoglycerate-dependent phosphoglycerate mutase (249 aa).

Residues 8–15, 21–22, Arg60, 87–90, Lys98, 114–115, and 183–184 each bind substrate; these read RHGESTWN, TG, ERHY, RR, and GN. His9 functions as the Tele-phosphohistidine intermediate in the catalytic mechanism. The active-site Proton donor/acceptor is Glu87.

It belongs to the phosphoglycerate mutase family. BPG-dependent PGAM subfamily.

The enzyme catalyses (2R)-2-phosphoglycerate = (2R)-3-phosphoglycerate. It participates in carbohydrate degradation; glycolysis; pyruvate from D-glyceraldehyde 3-phosphate: step 3/5. Functionally, catalyzes the interconversion of 2-phosphoglycerate and 3-phosphoglycerate. In Methanoregula boonei (strain DSM 21154 / JCM 14090 / 6A8), this protein is 2,3-bisphosphoglycerate-dependent phosphoglycerate mutase.